The chain runs to 283 residues: Polyamine aminopropyltransferase (283 aa).

The PABS domain occupies 5 to 238 (STWIDEYHKG…GIWSWTFASE (234 aa)). Glutamine 32 lines the S-methyl-5'-thioadenosine pocket. Spermidine-binding residues include histidine 63 and aspartate 87. Residues glutamate 107 and 139 to 140 (DG) contribute to the S-methyl-5'-thioadenosine site. Aspartate 158 serves as the catalytic Proton acceptor. 158 to 161 (DCSD) is a binding site for spermidine.

This sequence belongs to the spermidine/spermine synthase family. Homodimer or homotetramer.

Its subcellular location is the cytoplasm. It catalyses the reaction S-adenosyl 3-(methylsulfanyl)propylamine + putrescine = S-methyl-5'-thioadenosine + spermidine + H(+). It participates in amine and polyamine biosynthesis; spermidine biosynthesis; spermidine from putrescine: step 1/1. Its function is as follows. Catalyzes the irreversible transfer of a propylamine group from the amino donor S-adenosylmethioninamine (decarboxy-AdoMet) to putrescine (1,4-diaminobutane) to yield spermidine. The polypeptide is Polyamine aminopropyltransferase (Prochlorococcus marinus (strain MIT 9312)).